A 284-amino-acid chain; its full sequence is 4-diphosphocytidyl-2-C-methyl-D-erythritol kinase (284 aa).

Residue lysine 14 is part of the active site. 97–107 provides a ligand contact to ATP; that stretch reads PMGGGVGGGSS. Aspartate 139 is a catalytic residue.

It belongs to the GHMP kinase family. IspE subfamily.

It carries out the reaction 4-CDP-2-C-methyl-D-erythritol + ATP = 4-CDP-2-C-methyl-D-erythritol 2-phosphate + ADP + H(+). It functions in the pathway isoprenoid biosynthesis; isopentenyl diphosphate biosynthesis via DXP pathway; isopentenyl diphosphate from 1-deoxy-D-xylulose 5-phosphate: step 3/6. Functionally, catalyzes the phosphorylation of the position 2 hydroxy group of 4-diphosphocytidyl-2C-methyl-D-erythritol. The sequence is that of 4-diphosphocytidyl-2-C-methyl-D-erythritol kinase from Pseudoalteromonas translucida (strain TAC 125).